We begin with the raw amino-acid sequence, 580 residues long: Alpha-thujene synthase, chloroplastic (580 aa).

The transit peptide at 1 to 32 directs the protein to the chloroplast; sequence MALQLLTPSFSFQHSPSPHKLTTLRYTHHRIR. 5 residues coordinate (2E)-geranyl diphosphate: R296, D333, D337, R473, and D476. Residues D333 and D337 each contribute to the Mg(2+) site. Positions 333 to 337 match the DDXXD motif motif; it reads DDVYD. Positions 476, 480, and 484 each coordinate Mg(2+).

This sequence belongs to the terpene synthase family. Tpsb subfamily. In terms of assembly, monomer. Mg(2+) is required as a cofactor. Requires Mn(2+) as cofactor. As to expression, expressed in developing and mature fruits. Barely detectable in leaves and shoots.

The protein localises to the plastid. Its subcellular location is the chloroplast. The enzyme catalyses (2E)-geranyl diphosphate = alpha-thujene + diphosphate. Its pathway is secondary metabolite biosynthesis; terpenoid biosynthesis. Its function is as follows. Monoterpene synthase (TPS) involved in the biosynthesis of monoterpene natural products used by traditional Chinese medicine to treat headache, inflammation and intoxication. Catalyzes the conversion of (2E)-geranyl diphosphate (GPP) into alpha-thujene. The protein is Alpha-thujene synthase, chloroplastic of Litsea cubeba (Aromatic litsea).